We begin with the raw amino-acid sequence, 120 residues long: Large ribosomal subunit protein uL22 (120 aa).

A disordered region spans residues 1 to 20; it reads MFVNRRYTARGKNLPSSPKK.

Belongs to the universal ribosomal protein uL22 family. In terms of assembly, part of the 50S ribosomal subunit.

Its function is as follows. This protein binds specifically to 23S rRNA; its binding is stimulated by other ribosomal proteins, e.g. L4, L17, and L20. It is important during the early stages of 50S assembly. It makes multiple contacts with different domains of the 23S rRNA in the assembled 50S subunit and ribosome. The globular domain of the protein is located near the polypeptide exit tunnel on the outside of the subunit, while an extended beta-hairpin is found that lines the wall of the exit tunnel in the center of the 70S ribosome. The chain is Large ribosomal subunit protein uL22 from Borrelia hermsii (strain HS1 / DAH).